A 1073-amino-acid polypeptide reads, in one-letter code: ATP-dependent helicase/deoxyribonuclease subunit B (1073 aa).

The protein belongs to the helicase family. AddB/RexB type 2 subfamily. In terms of assembly, heterodimer of AddA and RexB. Mg(2+) is required as a cofactor.

Its function is as follows. The heterodimer acts as both an ATP-dependent DNA helicase and an ATP-dependent, dual-direction single-stranded exonuclease. Recognizes the chi site generating a DNA molecule suitable for the initiation of homologous recombination. This subunit has 5' -&gt; 3' nuclease activity but not helicase activity. The protein is ATP-dependent helicase/deoxyribonuclease subunit B of Streptococcus equi subsp. zooepidemicus (strain MGCS10565).